The chain runs to 97 residues: Large ribosomal subunit protein bL27 (97 aa).

Positions 1-12 (MLKMNLANLQLF) are excised as a propeptide. The tract at residues 14 to 37 (HKKGGGSTSNGRDSQAKRLGAKAA) is disordered.

Belongs to the bacterial ribosomal protein bL27 family. The N-terminus is cleaved by ribosomal processing cysteine protease Prp.

The sequence is that of Large ribosomal subunit protein bL27 from Streptococcus agalactiae serotype III (strain NEM316).